We begin with the raw amino-acid sequence, 293 residues long: MKGTQTKEKQRVALVIQYLGSRFHGWQWQPNQRTVQAEIENAIAEVLGETVTLHGAGRTDAGVHAAAQVAHFDMVSPIPASRWVDILNARLPEDILIRGSAQVPLTWHARFSAQWRRYRYTFYTEQRPNLFVKPYSWHYYHFPLDESLMQQALNPLLGRHHLAAFHRAGSRRDHSWVEVQSTHCHRQGPFIHLEIQANGFLYGMVRLLVGLLVEVGSGKRSLENFTEIWRKQQREAVKYAAPAKGLCLLRVGYEEFPFPPSLWFDSQPLFLFNQVLDSSLSFPNQSLPYGMTS.

The active-site Nucleophile is aspartate 60. Tyrosine 118 contributes to the substrate binding site.

It belongs to the tRNA pseudouridine synthase TruA family. Homodimer.

The enzyme catalyses uridine(38/39/40) in tRNA = pseudouridine(38/39/40) in tRNA. In terms of biological role, formation of pseudouridine at positions 38, 39 and 40 in the anticodon stem and loop of transfer RNAs. This Rippkaea orientalis (strain PCC 8801 / RF-1) (Cyanothece sp. (strain PCC 8801)) protein is tRNA pseudouridine synthase A.